The sequence spans 699 residues: Elongation factor G (699 aa).

The tr-type G domain occupies 8 to 288; that stretch reads EDYRNFGIMA…AVVDYLPSPM (281 aa). GTP contacts are provided by residues 17 to 24, 86 to 90, and 140 to 143; these read AHIDAGKT, DTPGH, and NKMD.

Belongs to the TRAFAC class translation factor GTPase superfamily. Classic translation factor GTPase family. EF-G/EF-2 subfamily.

The protein resides in the cytoplasm. Its function is as follows. Catalyzes the GTP-dependent ribosomal translocation step during translation elongation. During this step, the ribosome changes from the pre-translocational (PRE) to the post-translocational (POST) state as the newly formed A-site-bound peptidyl-tRNA and P-site-bound deacylated tRNA move to the P and E sites, respectively. Catalyzes the coordinated movement of the two tRNA molecules, the mRNA and conformational changes in the ribosome. The sequence is that of Elongation factor G from Rhizobium leguminosarum bv. trifolii (strain WSM2304).